The primary structure comprises 240 residues: tRNA1(Val) (adenine(37)-N6)-methyltransferase (240 aa).

The protein belongs to the methyltransferase superfamily. tRNA (adenine-N(6)-)-methyltransferase family.

The protein localises to the cytoplasm. It catalyses the reaction adenosine(37) in tRNA1(Val) + S-adenosyl-L-methionine = N(6)-methyladenosine(37) in tRNA1(Val) + S-adenosyl-L-homocysteine + H(+). Specifically methylates the adenine in position 37 of tRNA(1)(Val) (anticodon cmo5UAC). The chain is tRNA1(Val) (adenine(37)-N6)-methyltransferase from Christiangramia forsetii (strain DSM 17595 / CGMCC 1.15422 / KT0803) (Gramella forsetii).